The primary structure comprises 292 residues: Calponin-1 (292 aa).

One can recognise a Calponin-homology (CH) domain in the interval 28–131 (PQTERQLRVW…STLIALASQA (104 aa)). Calponin-like repeat units lie at residues 164-189 (IGLQMGTNKFASQQGMTAYGTRRHLY), 204-229 (ISLQMGTNKGASQAGMTAPGTKRQIF), and 243-268 (IGLQMGSNKGASQQGMTVYGLPRQVY). T170 carries the phosphothreonine; by ROCK2 modification. S175 is subject to Phosphoserine; by PKC, CaMK2 and ROCK2. T180 and T184 each carry phosphothreonine; by ROCK2. T184 is subject to Phosphothreonine; by PKC and CaMK2. Positions 185-193 (RRHLYDPKL) are calmodulin-binding. Position 259 is a phosphothreonine; by ROCK2 (T259).

It belongs to the calponin family. In terms of processing, phosphorylation by PKC or CaM kinase II reduces the binding of calponin to F-actin and tropomyosin. In terms of tissue distribution, smooth muscle, and tissues containing significant amounts of smooth muscle.

Its function is as follows. Thin filament-associated protein that is implicated in the regulation and modulation of smooth muscle contraction. It is capable of binding to actin, calmodulin and tropomyosin. The interaction of calponin with actin inhibits the actomyosin Mg-ATPase activity. This Gallus gallus (Chicken) protein is Calponin-1 (CNN1).